The primary structure comprises 1396 residues: Melanoma inhibitory activity protein 2 (1396 aa).

Residues 1 to 22 (MAEVSVQRILLLVVSLAKCLEG) form the signal peptide. Residues 23–604 (TKLLAHLKKC…YGFMSSALSP (582 aa)) lie on the Lumenal side of the membrane. The region spanning 39 to 101 (TLISRVLALR…PRDAVEIEEV (63 aa)) is the SH3 domain. N-linked (GlcNAc...) asparagine glycosylation is present at Asn59. 2 disordered regions span residues 197 to 288 (EGAG…VPDE) and 331 to 361 (ESNPPLQDIPSSVPPDEEVPAPCREISTDKE). Residues 243–258 (SDTEPTQELALEEESD) are compositionally biased toward acidic residues. A glycan (N-linked (GlcNAc...) asparagine) is linked at Asn366. Disordered stretches follow at residues 396–421 (DKGENEDGEVDNLKHPIGSDFDPEKE) and 525–557 (PMEEHEGVHFKPSSSKRNEDDSNSWADPEELSV). The stretch at 605-625 (IEILLESVVAALPEDMRADFN) is an intramembrane region. Residues 626–628 (PSG) are Lumenal-facing. A helical membrane pass occupies residues 629-649 (FSLELAVCVLSVGLLAVVLFL). Topologically, residues 650–1396 (WRGFRSIRSR…AADPPETQEA (747 aa)) are cytoplasmic. Residues 651–1243 (RGFRSIRSRF…RSYNMPSLDK (593 aa)) form a mediates interaction with MIA3 region. Coiled coils occupy residues 693–867 (YEGL…LVTS) and 914–1082 (AAKL…NRQK). Residues 1103 to 1396 (PNTAFGREHS…AADPPETQEA (294 aa)) form a disordered region. The segment at 1105–1396 (TAFGREHSPY…AADPPETQEA (292 aa)) is proline-rich domain (PRD); probably mediates interaction with COPII coat subunits. Positions 1135-1146 (LLEGPLRLSPLL) are enriched in low complexity. The span at 1165 to 1179 (MNTERGESSYDRLSD) shows a compositional bias: basic and acidic residues. Positions 1252–1269 (MESSGNGTKDNLGNSNVP) are enriched in polar residues. Composition is skewed to pro residues over residues 1331 to 1342 (RDFPGPPLPPFP) and 1351 to 1368 (GFPPYLPPRAGFFPPPPH).

It belongs to the MIA/OTOR family. Interacts with MIA3. Interacts with the COPII coat subunits SEC23A, SEC23B and maybe SEC24C. Interacts with PREB; recruits PREB to endoplasmic reticulum exit sites. Interacts with APOB. Isoform 1 is expressed in liver (at protein level). Isoform 2 is highly expressed in liver and weakly in testis.

The protein resides in the endoplasmic reticulum membrane. Plays a role in the transport of cargos that are too large to fit into COPII-coated vesicles and require specific mechanisms to be incorporated into membrane-bound carriers and exported from the endoplasmic reticulum. Plays a role in the secretion of lipoproteins, pre-chylomicrons and pre-VLDLs, by participating in their export from the endoplasmic reticulum. Thereby, may play a role in cholesterol and triglyceride homeostasis. Required for collagen VII (COL7A1) secretion by loading COL7A1 into transport carriers and recruiting PREB/SEC12 at the endoplasmic reticulum exit sites. The chain is Melanoma inhibitory activity protein 2 from Mus musculus (Mouse).